We begin with the raw amino-acid sequence, 108 residues long: Putative bolA-like protein K11H12.1 (108 aa).

Positions 89 to 108 are disordered; sequence SKWDGQKQEDSPTCRGGFGK.

This sequence belongs to the BolA/IbaG family.

The protein is Putative bolA-like protein K11H12.1 of Caenorhabditis elegans.